Reading from the N-terminus, the 972-residue chain is uncharacterized protein (972 aa).

The first 21 residues, 1 to 21 (MTNMILLSAVFLSLAILETHC), serve as a signal peptide directing secretion. Over 22-932 (ANHISTGIST…KELGEKLYHV (911 aa)) the chain is Extracellular. The segment at 892-912 (EPTVTTTTESPPPPTTTTRQI) is disordered. A helical transmembrane segment spans residues 933–953 (LFFMGVLTVSVAGGVIILSFI). Residues 954 to 972 (GCLIMRKMEDAPQKTKYSV) lie on the Cytoplasmic side of the membrane.

The protein localises to the host membrane. This is an uncharacterized protein from Magallana gigas (Pacific oyster).